The following is a 154-amino-acid chain: Lipoprotein signal peptidase (154 aa).

3 consecutive transmembrane segments (helical) span residues 4 to 24 (IIIP…KLWI), 62 to 82 (LFTL…MKHI), and 84 to 104 (GSYW…GNFI). Residues Asp-114 and Asp-130 contribute to the active site. Residues 125–145 (IFNVADSYLTIGIICLMIALW) traverse the membrane as a helical segment.

Belongs to the peptidase A8 family.

Its subcellular location is the cell membrane. It carries out the reaction Release of signal peptides from bacterial membrane prolipoproteins. Hydrolyzes -Xaa-Yaa-Zaa-|-(S,diacylglyceryl)Cys-, in which Xaa is hydrophobic (preferably Leu), and Yaa (Ala or Ser) and Zaa (Gly or Ala) have small, neutral side chains.. Its pathway is protein modification; lipoprotein biosynthesis (signal peptide cleavage). Its function is as follows. This protein specifically catalyzes the removal of signal peptides from prolipoproteins. This Streptococcus agalactiae serotype V (strain ATCC BAA-611 / 2603 V/R) protein is Lipoprotein signal peptidase.